The following is a 170-amino-acid chain: Acireductone dioxygenase (170 aa).

Fe(2+) is bound by residues His99, His101, Glu105, and His144. Ni(2+) is bound by residues His99, His101, Glu105, and His144.

This sequence belongs to the acireductone dioxygenase (ARD) family. Monomer. Fe(2+) serves as cofactor. The cofactor is Ni(2+).

The enzyme catalyses 1,2-dihydroxy-5-(methylsulfanyl)pent-1-en-3-one + O2 = 3-(methylsulfanyl)propanoate + CO + formate + 2 H(+). It carries out the reaction 1,2-dihydroxy-5-(methylsulfanyl)pent-1-en-3-one + O2 = 4-methylsulfanyl-2-oxobutanoate + formate + 2 H(+). The protein operates within amino-acid biosynthesis; L-methionine biosynthesis via salvage pathway; L-methionine from S-methyl-5-thio-alpha-D-ribose 1-phosphate: step 5/6. Its function is as follows. Catalyzes 2 different reactions between oxygen and the acireductone 1,2-dihydroxy-3-keto-5-methylthiopentene (DHK-MTPene) depending upon the metal bound in the active site. Fe-containing acireductone dioxygenase (Fe-ARD) produces formate and 2-keto-4-methylthiobutyrate (KMTB), the alpha-ketoacid precursor of methionine in the methionine recycle pathway. Ni-containing acireductone dioxygenase (Ni-ARD) produces methylthiopropionate, carbon monoxide and formate, and does not lie on the methionine recycle pathway. This chain is Acireductone dioxygenase, found in Bacillus cereus (strain ZK / E33L).